A 341-amino-acid chain; its full sequence is GTPase Obg (341 aa).

The Obg domain maps to methionine 1–isoleucine 159. Residues alanine 160–glutamate 327 form the OBG-type G domain. Residues glycine 166–serine 173, phenylalanine 191–tyrosine 195, aspartate 212–glycine 215, serine 279–aspartate 282, and serine 308–valine 310 contribute to the GTP site. Mg(2+) contacts are provided by serine 173 and threonine 193.

The protein belongs to the TRAFAC class OBG-HflX-like GTPase superfamily. OBG GTPase family. Monomer. It depends on Mg(2+) as a cofactor.

It localises to the cytoplasm. Functionally, an essential GTPase which binds GTP, GDP and possibly (p)ppGpp with moderate affinity, with high nucleotide exchange rates and a fairly low GTP hydrolysis rate. Plays a role in control of the cell cycle, stress response, ribosome biogenesis and in those bacteria that undergo differentiation, in morphogenesis control. This is GTPase Obg from Bartonella quintana (strain Toulouse) (Rochalimaea quintana).